The sequence spans 426 residues: Histone-binding protein RBBP7 (426 aa).

A2 carries the post-translational modification N-acetylalanine. At S3 the chain carries Phosphoserine. N6-acetyllysine; alternate is present on K4. Residue K4 forms a Glycyl lysine isopeptide (Lys-Gly) (interchain with G-Cter in SUMO2); alternate linkage. K4 is covalently cross-linked (Glycyl lysine isopeptide (Lys-Gly) (interchain with G-Cter in ubiquitin); alternate). Phosphothreonine is present on T10. 7 WD repeats span residues 47 to 122, 128 to 173, 181 to 217, 228 to 269, 275 to 312, 318 to 370, and 377 to 404; these read QWLP…KINH, RARY…LRLR, GLSW…KIVD, VVED…HLVD, VNCL…LHTF, EIFQ…LFIH, and ISDF…IWQM. S95 is subject to Phosphoserine. K101 participates in a covalent cross-link: Glycyl lysine isopeptide (Lys-Gly) (interchain with G-Cter in SUMO2). K119 bears the N6-acetyllysine mark. Residue K155 forms a Glycyl lysine isopeptide (Lys-Gly) (interchain with G-Cter in SUMO2) linkage. N6-acetyllysine; alternate is present on K159. K159 participates in a covalent cross-link: Glycyl lysine isopeptide (Lys-Gly) (interchain with G-Cter in SUMO2); alternate. S355 is modified (phosphoserine).

This sequence belongs to the WD repeat RBAP46/RBAP48/MSI1 family. As to quaternary structure, binds directly to helix 1 of the histone fold of histone H4, a region that is not accessible when H4 is in chromatin. Subunit of the type B histone acetyltransferase (HAT) complex, composed of RBBP7 and HAT1. Subunit of the core histone deacetylase (HDAC) complex, which is composed of HDAC1, HDAC2, RBBP4 and RBBP7. The core HDAC complex associates with SIN3A, ARID4B/SAP180, SAP18, SAP30, SAP130, SUDS3/SAP45 and possibly ARID4A/RBP1 and ING1 to form the SIN3 HDAC complex. Component of the nucleosome remodeling and deacetylase (NuRD) repressor complex, composed of core proteins MTA1, MTA2, MTA3, RBBP4, RBBP7, HDAC1, HDAC2, MBD2, MBD3, and peripherally associated proteins CDK2AP1, CDK2AP2, GATAD2A, GATAD2B, CHD3, CHD4 and CHD5. The exact stoichiometry of the NuRD complex is unknown, and some subunits such as MBD2 and MBD3, GATAD2A and GATAD2B, and CHD3, CHD4 and CHD5 define mutually exclusive NuRD complexes. The NuRD complex may interact with MBD3L1. The NuRD complex may interact with MBD3L2. Subunit of the PRC2/EED-EZH2 complex, which is composed of at least EED, EZH2, RBBP4, RBBP7 and SUZ12. The PRC2/EED-EZH2 complex may also associate with HDAC1. Component of the NURF-1 ISWI chromatin remodeling complex (also called the nucleosome-remodeling factor (NURF) complex) at least composed of SMARCA1, BPTF, RBBP4 and RBBP7. Within the complex interacts with SMARCA1. Component of the BPFT-SMARCA1 complex at least composed of SMARCA1, BPFT, RBBP4 and RBBP7; the complex is catalytically inactive and does not remodel chromatin. Within the complex interacts with SMARCA1. Interacts with BRCA1. Interacts with CDK2AP1. Interacts with CENPA. Interacts with CHD3. Interacts with CHD4. Interacts with CREBBP, and this interaction may be enhanced by the binding of phosphorylated CREB1 to CREBBP. Interacts with HDAC7. Interacts with MTA1. Interacts with PWWP2B. Interacts with RB1 (via viral protein-binding domain). Interacts with SUV39H1.

Its subcellular location is the nucleus. In terms of biological role, core histone-binding subunit that may target chromatin remodeling factors, histone acetyltransferases and histone deacetylases to their histone substrates in a manner that is regulated by nucleosomal DNA. Component of several complexes which regulate chromatin metabolism. These include the type B histone acetyltransferase (HAT) complex, which is required for chromatin assembly following DNA replication; the core histone deacetylase (HDAC) complex, which promotes histone deacetylation and consequent transcriptional repression; the nucleosome remodeling and histone deacetylase complex (the NuRD complex), which promotes transcriptional repression by histone deacetylation and nucleosome remodeling; and the PRC2/EED-EZH2 complex, which promotes repression of homeotic genes during development; and the NURF (nucleosome remodeling factor) complex. The protein is Histone-binding protein RBBP7 (RBBP7) of Pongo abelii (Sumatran orangutan).